The following is a 449-amino-acid chain: MEEKLSRRRRVVLVPVPAQGHITPMIQLAKALHSKGFSITVVQTKFNYLNPSNDLSDFQFVTIPENLPVSDLKNLGPGRFLIKLANECYVSFKDLLGQLLVNEEEEIACVIYDEFMYFVEVAVKEFKLRNVILSTTSATAFVCRFVMCELYAKDGLAQLKEGGEREVELVPELYPIRYKDLPSSVFASVESSVELFKNTCYKGTASSVIINTVRCLEMSSLEWLQQELEIPVYSIGPLHMVVSAPPTSLLEENESCIEWLNKQKPSSVIYISLGSFTLMETKEMLEMAYGFVSSNQHFLWVIRPGSICGSEISEEELLKKMVITDRGYIVKWAPQKQVLAHSAVGAFWSHCGWNSTLESLGEGVPLICRPFTTDQKGNARYLECVWKVGIQVEGELERGAIERAVKRLMVDEEGEEMKRRALSLKEKLKASVLAQGSSHKSLDDFIKTL.

Residues Ser275, 333 to 335 (APQ), 350 to 358 (HCGWNSTLE), and 372 to 375 (TTDQ) each bind UDP-alpha-D-glucose.

Belongs to the UDP-glycosyltransferase family.

The chain is UDP-glycosyltransferase 76E7 (UGT76E7) from Arabidopsis thaliana (Mouse-ear cress).